Here is a 418-residue protein sequence, read N- to C-terminus: Bifunctional protein GlmU (418 aa).

Residues 1 to 236 (MAAVIVLAAG…VWQTEGVNDR (236 aa)) are pyrophosphorylase. Residues 7 to 10 (LAAG), Lys-21, Gln-74, 79 to 80 (GT), 102 to 104 (YGD), Gly-141, Glu-155, Asn-170, and Asn-234 each bind UDP-N-acetyl-alpha-D-glucosamine. Asp-104 contributes to the Mg(2+) binding site. Asn-234 contributes to the Mg(2+) binding site. Residues 237-257 (VQLARMNAEVNRRIVTGWMRA) form a linker region. Positions 258–418 (GVTIIDPTST…DDTLNPEADQ (161 aa)) are N-acetyltransferase. Arg-339 and Lys-357 together coordinate UDP-N-acetyl-alpha-D-glucosamine. His-369 serves as the catalytic Proton acceptor. Tyr-372 is a binding site for UDP-N-acetyl-alpha-D-glucosamine. Residue Ala-386 coordinates acetyl-CoA.

It in the N-terminal section; belongs to the N-acetylglucosamine-1-phosphate uridyltransferase family. In the C-terminal section; belongs to the transferase hexapeptide repeat family. As to quaternary structure, homotrimer. It depends on Mg(2+) as a cofactor.

The protein resides in the cytoplasm. It carries out the reaction alpha-D-glucosamine 1-phosphate + acetyl-CoA = N-acetyl-alpha-D-glucosamine 1-phosphate + CoA + H(+). The catalysed reaction is N-acetyl-alpha-D-glucosamine 1-phosphate + UTP + H(+) = UDP-N-acetyl-alpha-D-glucosamine + diphosphate. The protein operates within nucleotide-sugar biosynthesis; UDP-N-acetyl-alpha-D-glucosamine biosynthesis; N-acetyl-alpha-D-glucosamine 1-phosphate from alpha-D-glucosamine 6-phosphate (route II): step 2/2. Its pathway is nucleotide-sugar biosynthesis; UDP-N-acetyl-alpha-D-glucosamine biosynthesis; UDP-N-acetyl-alpha-D-glucosamine from N-acetyl-alpha-D-glucosamine 1-phosphate: step 1/1. It functions in the pathway bacterial outer membrane biogenesis; LPS lipid A biosynthesis. Its function is as follows. Catalyzes the last two sequential reactions in the de novo biosynthetic pathway for UDP-N-acetylglucosamine (UDP-GlcNAc). The C-terminal domain catalyzes the transfer of acetyl group from acetyl coenzyme A to glucosamine-1-phosphate (GlcN-1-P) to produce N-acetylglucosamine-1-phosphate (GlcNAc-1-P), which is converted into UDP-GlcNAc by the transfer of uridine 5-monophosphate (from uridine 5-triphosphate), a reaction catalyzed by the N-terminal domain. This chain is Bifunctional protein GlmU, found in Cutibacterium acnes (strain DSM 16379 / KPA171202) (Propionibacterium acnes).